We begin with the raw amino-acid sequence, 161 residues long: ATP synthase subunit b 1 (161 aa).

A helical transmembrane segment spans residues 6–26; that stretch reads EFYVALGFVIFVAILLYYGVH.

Belongs to the ATPase B chain family. F-type ATPases have 2 components, F(1) - the catalytic core - and F(0) - the membrane proton channel. F(1) has five subunits: alpha(3), beta(3), gamma(1), delta(1), epsilon(1). F(0) has three main subunits: a(1), b(2) and c(10-14). The alpha and beta chains form an alternating ring which encloses part of the gamma chain. F(1) is attached to F(0) by a central stalk formed by the gamma and epsilon chains, while a peripheral stalk is formed by the delta and b chains.

The protein localises to the cell inner membrane. Functionally, f(1)F(0) ATP synthase produces ATP from ADP in the presence of a proton or sodium gradient. F-type ATPases consist of two structural domains, F(1) containing the extramembraneous catalytic core and F(0) containing the membrane proton channel, linked together by a central stalk and a peripheral stalk. During catalysis, ATP synthesis in the catalytic domain of F(1) is coupled via a rotary mechanism of the central stalk subunits to proton translocation. Its function is as follows. Component of the F(0) channel, it forms part of the peripheral stalk, linking F(1) to F(0). The polypeptide is ATP synthase subunit b 1 (Beijerinckia indica subsp. indica (strain ATCC 9039 / DSM 1715 / NCIMB 8712)).